The following is a 1080-amino-acid chain: MLRSLTCSSTITSTSLFFRSFRQLPRSYLSPSSSTTVVGASGRNIRRLSTLEAAGRRLFLRRGLKLLSAASRGLNGQFSRLSIRAVATQSAPSSYPGQDEAEKLGFEKVSEEFISECKSKAVLFKHKKTGCEVMSVSNDDENKVFGIVFRTPPKDSTGIPHILEHSVLCGSRKYPMKEPFVELLKGSLHTFLNAFTYPDRTCYPVASTNKKDFYNLVDVYLDAVFFPKCVDDVHTFQQEGWHYELNDPSEDISYKGVVFNEMKGVYSQPDNILGRVTQQALCPENTYGVDSGGDPKDIPKLTFEKFKEFHRQYYHPSNARIWFYGDDDPVHRLRVLSEYLDMFDASPARDSSKVEPQKLFSRPRRIVEKYPAGEDGDLKKKHMVCLNWLLSDKPLDLQTQLALGFLDHLMLGTPASPLRKILLESGLGEALVNSGMEDELLQPQFSIGLKGVSDDNVQKVEELVMNTLRKLADEGFDTDAVEASMNTIEFSLRENNTGSSPRGLSLMLQSIAKWIYDMDPFEPLKYEEPLKSLKARIAEKGSKSVFSPLIEEYILNNPHCVTIEMQPDPEKASLEEAEEKSILEKVKASMTEEDLTELARATEELRLKQETPDPPDALKCVPSLNLSDIPKEPIYVPTEVGDINGVKVLRNDLFTNNILYTEVVFDMGSVKHELLQLIPLFCQSLLEMGTQDLTFVQLNQLIGRKTGGISVYPLTSSVYGRDDPCSKIIVRGKSMVGRAEDLFNLMNCVLQEVRFTDQQRFKQFVSQSRARMENRLRGSGQGIAAARMDAMLNVAGWMSEQMGGLSYLEFLHTLEQKVDQDWEGISSSLEEIRRSFLSRNGCIVNMTADGKSLTNTEKYVGKFLDLLPENPSGELVTWDARLPLRNEAIVIPTQVNYVGKAGNIYSSGYKLDGSSYVISKHISNTWLWDRVRVSGGAYGGSCDFDSHSGVFSFLSYRDPNLLKTLDIYDGTGDFLRGLDVDEDTLTKAIIGTIGDVDSYQLPDAKGYTSLLRHLLNVTDEERQIRREEILSTSLKDFKEFAEAIDSVSDKGVAVAVASQEDIDAANRERSNFFEVKKAAL.

A chloroplast and mitochondrion-targeting transit peptide spans 1–84 (MLRSLTCSST…NGQFSRLSIR (84 aa)). His161 contributes to the Zn(2+) binding site. Glu164 functions as the Proton acceptor in the catalytic mechanism. A Zn(2+)-binding site is contributed by His165. Residue Glu239 is part of the active site. Position 261 (Glu261) interacts with Zn(2+). Arg704 lines the Mg(2+) pocket.

Belongs to the peptidase M16 family. PreP subfamily. Homodimer. Requires Zn(2+) as cofactor. Mg(2+) is required as a cofactor. In terms of tissue distribution, expressed in leaves, flowers and roots, but not detected in siliques and shoots.

It is found in the plastid. The protein resides in the chloroplast stroma. Its subcellular location is the mitochondrion matrix. Completely inhibited by the metal chelator orthophenanthroline. In terms of biological role, ATP-independent protease that degrades both mitochondrial and chloroplastic transit peptides after their cleavage. Also degrades other unstructured peptides. Specific for peptides in the range of 10 to 65 residues. Shows a preference for cleavage after small polar residues and before basic residues, but without any positional preference. This chain is Presequence protease 2, chloroplastic/mitochondrial (PREP2), found in Arabidopsis thaliana (Mouse-ear cress).